The primary structure comprises 56 residues: U-limacoditoxin(3)-Dv21 (56 aa).

An N-terminal signal peptide occupies residues 1–19 (MKKVIMLLLIFALFAYALS). Intrachain disulfides connect C26–C41, C33–C46, and C40–C53.

The protein belongs to the limacoditoxin-22 family. Expressed by the venom secretory cell of the spine. The spine is a cuticular structure containing a single large nucleated venom-secreting cell at its base. It is an independent unit capable of producing, storing and injecting venom. On the back of D.vulnerans caterpillars, spines are grouped together by 50 to 100 to form scoli, of which there are eight in D.vulnerans.

Its subcellular location is the secreted. Its function is as follows. Probable toxin. Shows a moderate antiparasitic activity against the major pathogenic nematode of ruminants (H.contortus, IC(50)=22.1 uM). Does not show insecticidal activities. Does not induce increase in intracellular calcium in mouse DRG neurons, suggesting that it does not induce pain. This Doratifera vulnerans (Mottled cup moth) protein is U-limacoditoxin(3)-Dv21.